A 432-amino-acid chain; its full sequence is Probable N-acetylmuramoyl-L-alanine amidase AmiB (432 aa).

The N-terminal stretch at 1–20 is a signal peptide; that stretch reads MKTKILFFLFFSTFSFSIFA. The 220-residue stretch at 25–244 folds into the MurNAc-LAA domain; the sequence is IAIDPGHGGK…IAYMIYEGLV (220 aa). 2 LysM domains span residues 292-335 and 385-429; these read IRHI…SIKI and LYHK…KIKL.

The protein belongs to the N-acetylmuramoyl-L-alanine amidase 3 family.

It is found in the periplasm. It carries out the reaction Hydrolyzes the link between N-acetylmuramoyl residues and L-amino acid residues in certain cell-wall glycopeptides.. Its function is as follows. Cell-wall hydrolase involved in septum cleavage during cell division. The polypeptide is Probable N-acetylmuramoyl-L-alanine amidase AmiB (amiB) (Haemophilus influenzae (strain ATCC 51907 / DSM 11121 / KW20 / Rd)).